A 576-amino-acid chain; its full sequence is Vacuolar protein sorting-associated protein vps5 (576 aa).

Disordered regions lie at residues M1–R60 and D156–S198. Phosphothreonine is present on T55. Over residues D156–V169 the composition is skewed to polar residues. Residues S170–S181 show a composition bias toward low complexity. One can recognise a PX domain in the interval T200–D317. A 1,2-diacyl-sn-glycero-3-phospho-(1D-myo-inositol-3-phosphate)-binding residues include R244, K270, and R284. S332 bears the Phosphoserine mark.

The protein belongs to the sorting nexin family. Component of the retromer complex which consists of vps29, vps26, vps35, vps5 and vps17.

The protein resides in the cytoplasm. It localises to the golgi apparatus. The protein localises to the membrane. Functionally, required for efficient sporulation target of PtdIns(3)P in vesicle transport required for onset of the forespore membrane formation. In terms of biological role, plays a role in vesicular protein sorting. Required for the endosome-to-Golgi retrieval of the vacuolar protein sorting receptor pep1/vps10. Component of the membrane-associated retromer complex which is essential in endosome-to-Golgi retrograde transport. The vps29-vps26-vps35 subcomplex may be involved in cargo selection. The polypeptide is Vacuolar protein sorting-associated protein vps5 (vps5) (Schizosaccharomyces pombe (strain 972 / ATCC 24843) (Fission yeast)).